The primary structure comprises 86 residues: UPF0297 protein STH1998 (86 aa).

Belongs to the UPF0297 family.

The polypeptide is UPF0297 protein STH1998 (Symbiobacterium thermophilum (strain DSM 24528 / JCM 14929 / IAM 14863 / T)).